Reading from the N-terminus, the 293-residue chain is 4-hydroxy-tetrahydrodipicolinate synthase (293 aa).

Position 45 (threonine 45) interacts with pyruvate. Tyrosine 133 functions as the Proton donor/acceptor in the catalytic mechanism. Lysine 161 serves as the catalytic Schiff-base intermediate with substrate. Position 203 (isoleucine 203) interacts with pyruvate.

The protein belongs to the DapA family. Homotetramer; dimer of dimers.

Its subcellular location is the cytoplasm. It catalyses the reaction L-aspartate 4-semialdehyde + pyruvate = (2S,4S)-4-hydroxy-2,3,4,5-tetrahydrodipicolinate + H2O + H(+). Its pathway is amino-acid biosynthesis; L-lysine biosynthesis via DAP pathway; (S)-tetrahydrodipicolinate from L-aspartate: step 3/4. Functionally, catalyzes the condensation of (S)-aspartate-beta-semialdehyde [(S)-ASA] and pyruvate to 4-hydroxy-tetrahydrodipicolinate (HTPA). The sequence is that of 4-hydroxy-tetrahydrodipicolinate synthase from Aliivibrio fischeri (strain MJ11) (Vibrio fischeri).